The primary structure comprises 466 residues: Small RNA degrading nuclease 2 (466 aa).

Residues 142 to 298 form the Exonuclease domain; that stretch reads MIAIDCEMVL…HDAEAAMKLV (157 aa). Positions 426 to 466 are disordered; that stretch reads EENNASSKKRKRENHSKGTRDRRRCKPLSRRKQRSNVKRRR. The segment covering 445-466 has biased composition (basic residues); sequence RDRRRCKPLSRRKQRSNVKRRR.

The protein belongs to the REXO1/REXO3 family.

The protein resides in the nucleus. 3'-5' exonuclease degrading single-stranded small RNAs. This is Small RNA degrading nuclease 2 (SDN2) from Arabidopsis thaliana (Mouse-ear cress).